Consider the following 268-residue polypeptide: 3-methyl-2-oxobutanoate hydroxymethyltransferase (268 aa).

2 residues coordinate Mg(2+): aspartate 44 and aspartate 83. Residues 44–45 (DS), aspartate 83, and lysine 113 contribute to the 3-methyl-2-oxobutanoate site. Mg(2+) is bound at residue glutamate 115. Glutamate 183 functions as the Proton acceptor in the catalytic mechanism.

It belongs to the PanB family. As to quaternary structure, homodecamer; pentamer of dimers. Requires Mg(2+) as cofactor.

The protein localises to the cytoplasm. It carries out the reaction 3-methyl-2-oxobutanoate + (6R)-5,10-methylene-5,6,7,8-tetrahydrofolate + H2O = 2-dehydropantoate + (6S)-5,6,7,8-tetrahydrofolate. It functions in the pathway cofactor biosynthesis; (R)-pantothenate biosynthesis; (R)-pantoate from 3-methyl-2-oxobutanoate: step 1/2. Its function is as follows. Catalyzes the reversible reaction in which hydroxymethyl group from 5,10-methylenetetrahydrofolate is transferred onto alpha-ketoisovalerate to form ketopantoate. The chain is 3-methyl-2-oxobutanoate hydroxymethyltransferase from Leptospira biflexa serovar Patoc (strain Patoc 1 / Ames).